Consider the following 556-residue polypeptide: 2-succinyl-5-enolpyruvyl-6-hydroxy-3-cyclohexene-1-carboxylate synthase (556 aa).

It belongs to the TPP enzyme family. MenD subfamily. As to quaternary structure, homodimer. It depends on Mg(2+) as a cofactor. The cofactor is Mn(2+). Thiamine diphosphate serves as cofactor.

The catalysed reaction is isochorismate + 2-oxoglutarate + H(+) = 5-enolpyruvoyl-6-hydroxy-2-succinyl-cyclohex-3-ene-1-carboxylate + CO2. It functions in the pathway quinol/quinone metabolism; 1,4-dihydroxy-2-naphthoate biosynthesis; 1,4-dihydroxy-2-naphthoate from chorismate: step 2/7. It participates in quinol/quinone metabolism; menaquinone biosynthesis. Functionally, catalyzes the thiamine diphosphate-dependent decarboxylation of 2-oxoglutarate and the subsequent addition of the resulting succinic semialdehyde-thiamine pyrophosphate anion to isochorismate to yield 2-succinyl-5-enolpyruvyl-6-hydroxy-3-cyclohexene-1-carboxylate (SEPHCHC). The sequence is that of 2-succinyl-5-enolpyruvyl-6-hydroxy-3-cyclohexene-1-carboxylate synthase from Escherichia coli (strain UTI89 / UPEC).